The sequence spans 97 residues: Putative defensin-like protein 227 (97 aa).

The N-terminal stretch at 1–26 is a signal peptide; the sequence is MKWATLFMVSCVLMFFVMNNINEVES. Intrachain disulfides connect Cys-35-Cys-97, Cys-45-Cys-76, Cys-53-Cys-91, and Cys-74-Cys-93.

The protein belongs to the DEFL family.

The protein localises to the secreted. The polypeptide is Putative defensin-like protein 227 (SCRL28) (Arabidopsis thaliana (Mouse-ear cress)).